The primary structure comprises 308 residues: Lipoyl synthase (308 aa).

Residues C48, C53, C59, C74, C78, C81, and S287 each coordinate [4Fe-4S] cluster. The Radical SAM core domain occupies W60–F277.

The protein belongs to the radical SAM superfamily. Lipoyl synthase family. Requires [4Fe-4S] cluster as cofactor.

The protein localises to the cytoplasm. The catalysed reaction is [[Fe-S] cluster scaffold protein carrying a second [4Fe-4S](2+) cluster] + N(6)-octanoyl-L-lysyl-[protein] + 2 oxidized [2Fe-2S]-[ferredoxin] + 2 S-adenosyl-L-methionine + 4 H(+) = [[Fe-S] cluster scaffold protein] + N(6)-[(R)-dihydrolipoyl]-L-lysyl-[protein] + 4 Fe(3+) + 2 hydrogen sulfide + 2 5'-deoxyadenosine + 2 L-methionine + 2 reduced [2Fe-2S]-[ferredoxin]. It participates in protein modification; protein lipoylation via endogenous pathway; protein N(6)-(lipoyl)lysine from octanoyl-[acyl-carrier-protein]: step 2/2. Catalyzes the radical-mediated insertion of two sulfur atoms into the C-6 and C-8 positions of the octanoyl moiety bound to the lipoyl domains of lipoate-dependent enzymes, thereby converting the octanoylated domains into lipoylated derivatives. The polypeptide is Lipoyl synthase (Chlamydia muridarum (strain MoPn / Nigg)).